A 506-amino-acid chain; its full sequence is Glutamyl-tRNA(Gln) amidotransferase subunit A, mitochondrial (506 aa).

Residues K62 and S141 each act as charge relay system in the active site. S165 (acyl-ester intermediate) is an active-site residue.

Belongs to the amidase family. GatA subfamily. As to quaternary structure, subunit of the heterotrimeric GatCAB amidotransferase (AdT) complex, composed of A, B and C subunits.

The protein resides in the mitochondrion. It catalyses the reaction L-glutamyl-tRNA(Gln) + L-glutamine + ATP + H2O = L-glutaminyl-tRNA(Gln) + L-glutamate + ADP + phosphate + H(+). Functionally, allows the formation of correctly charged Gln-tRNA(Gln) through the transamidation of misacylated Glu-tRNA(Gln) in the mitochondria. The reaction takes place in the presence of glutamine and ATP through an activated gamma-phospho-Glu-tRNA(Gln). The polypeptide is Glutamyl-tRNA(Gln) amidotransferase subunit A, mitochondrial (Emericella nidulans (strain FGSC A4 / ATCC 38163 / CBS 112.46 / NRRL 194 / M139) (Aspergillus nidulans)).